The following is a 297-amino-acid chain: MDGDGDPESVSHPEEASPEEQPEEAGAEASAEEEQLREAEEEEEAEAVEYLAELPEPLLLRVLAELPATELVQACRLVCLRWKELVDGAPLWLLKCQQEGLVPEGSADEERDHWQQFYFLSKRRRNLLRNPCGEEDLEGWSDVEHGGDGWRVEELPGDNGVEFTQDDSVKKYFASSFEWCRKAQVIDLQAEGYWEELLDTTQPAIVVKDWYSGRTDAGSLYELTVRLLSENEDVLAEFATGQVAVPEDGSWMEISHTFIDYGPGVRFVRFEHGGQDSVYWKGWFGARVTNSSVWVEP.

Positions 1 to 47 (MDGDGDPESVSHPEEASPEEQPEEAGAEASAEEEQLREAEEEEEAEA) are disordered. Acidic residues predominate over residues 16–47 (ASPEEQPEEAGAEASAEEEQLREAEEEEEAEA). The 48-residue stretch at 48-95 (VEYLAELPEPLLLRVLAELPATELVQACRLVCLRWKELVDGAPLWLLK) folds into the F-box domain. Ser-106 bears the Phosphoserine mark. The FBA domain maps to 117–297 (FYFLSKRRRN…VTNSSVWVEP (181 aa)). A carbohydrate is bound by residues 214 to 216 (RTD) and 279 to 280 (YW).

Component of the SCF(FBXO2) complex consisting of CUL1, RBX1, SKP1 and FBXO2. Predominantly detected as heterodimer with SKP1; the heterodimer with SKP1 is not part of the SCF(FBXO2) complex. Detected in brain and cochlea, in epithelial support cells and hair cells of the organ of Corti (at protein level).

The protein localises to the cytoplasm. Its subcellular location is the microsome membrane. Its pathway is protein modification; protein ubiquitination. In terms of biological role, substrate recognition component of a SCF (SKP1-CUL1-F-box protein) E3 ubiquitin-protein ligase complex that mediates the ubiquitination and subsequent proteasomal degradation of target proteins. Involved in the endoplasmic reticulum-associated degradation pathway (ERAD) for misfolded lumenal proteins by recognizing and binding sugar chains on unfolded glycoproteins that are retrotranslocated into the cytosol and promoting their ubiquitination and subsequent degradation. Prevents formation of cytosolic aggregates of unfolded glycoproteins that have been retrotranslocated into the cytosol. Able to recognize and bind denatured glycoproteins, preferentially those of the high-mannose type. The sequence is that of F-box only protein 2 (Fbxo2) from Mus musculus (Mouse).